Reading from the N-terminus, the 686-residue chain is Probable ferric reductase transmembrane component (686 aa).

7 helical membrane passes run 23–43 (LSGW…VPVV), 79–99 (TLWL…VGSA), 111–131 (VAAA…PLPY), 147–167 (VVVL…ATSG), 178–198 (WMGA…LPAV), 205–225 (TFYY…HVHS), and 256–276 (VTVV…ADLV). In terms of domain architecture, Ferric oxidoreductase spans 108 to 666 (LGRVAAAFMP…LAAGPQALVE (559 aa)). 308–314 (HPFTVAS) serves as a coordination point for FAD. A helical membrane pass occupies residues 392–412 (LMVVGGSAISFGLPFLRILNF). 431–439 (ILSQFRSNF) provides a ligand contact to NAD(+). N-linked (GlcNAc...) asparagine glycans are attached at residues asparagine 506 and asparagine 644.

The cofactor is FAD.

Its subcellular location is the membrane. It carries out the reaction 2 a Fe(II)-siderophore + NAD(+) + H(+) = 2 a Fe(III)-siderophore + NADH. Is required for the uptake of Fe(3+) ions. May participate in the transport of electrons from cytoplasm to an extracellular substrate (Fe(3+) ion) via FAD and heme intermediates. Involved in iron homeostasis. The chain is Probable ferric reductase transmembrane component (FRE8) from Eremothecium gossypii (strain ATCC 10895 / CBS 109.51 / FGSC 9923 / NRRL Y-1056) (Yeast).